The chain runs to 396 residues: MHYLKFPAIIAGMLLAGAASAEGPRARDLGVPFAGKPGANNAITDVAGVEVGYVSLISGEGKLERGKGPVRTGVTAVLPRGKESRTPVYAGWETSNAAGEMTGTVWLEERGYFDGPMMITNTHSVGVVRDAVVGWLADVKWPGAWFTPVVAETYDGMLNDINGFHVKPEHALRAIQTAASGPVAEGNVGGGVGMQCFGFKGGTGTASRVVEMDGKSYTVGVLVQCNFGMRPWLRVAGAPVGEELAGKYLPETRGTQTAAATNNGVAPGDGSIIVVMATDAPMLPHQLKRLAKRAAAGMGRMGDAGSNGSGDIFVAFSTANANVQSVGGNVISVETMPNDKLTLIFEAATQATEEAITNVLVAADTLTGVNGYTIQRLPHAELRAILKKYRRLAAAK.

Residues 1–21 (MHYLKFPAIIAGMLLAGAASA) form the signal peptide. S271 functions as the Nucleophile in the catalytic mechanism. Catalysis depends on proton donor/acceptor residues S309 and D311.

It belongs to the peptidase S58 family. In terms of assembly, heterooctamer of 4 heterodimers ((alpha:beta)4); each heterodimer is composed of an alpha subunit and a beta subunit processed from the same precursor. Post-translationally, autoproteolytic processing to generate the alpha and beta subunit is required for self-activation and is proposed to use a similar mechanism as substrate cleavage.

It localises to the periplasm. The enzyme catalyses Cleaves N-terminal beta-homoamino acids from peptides composed of 2 to 6 amino acids.. Its activity is regulated as follows. Inhibited by AEBSF (4-(2-aminoethyl)benzenesulfonyl fluoride, Pefabloc SC). Functionally, beta-aminopeptidase that can cleave synthetic beta-peptides which consist of backbone-elongated beta-amino acid residues that are not processed by common proteolytic enzymes. Can cleave the beta-peptides beta-homoVal-beta-homoAla-beta-homoLeu and beta-homoAla-beta-homoLeu. Requires a beta-amino acid at the N-terminus of peptide substrates and cleaves the peptide bond between the N-terminal beta-amino acid and the amino acid at the second position of tripeptidic substrates of the general structure H-betahXaa-Ile-betahTyr-OH according to the following preferences with regard to the side chain of the N-terminal beta-amino acid: aliphatic and aromatic &gt; OH-containing &gt; hydrogen, basic and polar. beta-homoVal-beta-homoAla-beta-homoLeu and beta-homoAla-beta-homoLeu. The sequence is that of Beta-peptidyl aminopeptidase BapA from Sphingosinicella microcystinivorans.